The primary structure comprises 399 residues: GDP-D-glucose phosphorylase 1 (399 aa).

His237 (tele-GMP-histidine intermediate) is an active-site residue.

This sequence belongs to the GDPGP1 family.

The protein localises to the cytoplasm. It catalyses the reaction GDP-alpha-D-glucose + phosphate = alpha-D-glucose 1-phosphate + GDP + H(+). Specific and highly efficient GDP-D-glucose phosphorylase regulating the levels of GDP-D-glucose in cells. In Xenopus laevis (African clawed frog), this protein is GDP-D-glucose phosphorylase 1 (gdpgp1).